Reading from the N-terminus, the 744-residue chain is Tripartite motif-containing protein 3 (744 aa).

A2 carries the N-acetylalanine modification. The tract at residues A2 to P290 is interaction with KIF21B. Phosphoserine is present on S7. The RING-type zinc finger occupies C22–R63. The segment at G110–L151 adopts a B box-type zinc-finger fold. C115, H118, C138, and H143 together coordinate Zn(2+). Positions D153–E224 form a coiled coil. The stretch at T317–A418 is one Filamin repeat. The tract at residues L419–K464 is disordered. The residue at position 427 (S427) is a Phosphoserine. NHL repeat units follow at residues V473–E516, K520–E563, G564–N605, V609–D652, L656–S699, and G700–L743.

The protein belongs to the TRIM/RBCC family. As to quaternary structure, forms homooligomers. Interacts with TRIM2; this interaction reduces TRIM2 activity. Associates with myosin-Vb (MYO5B) and alpha-actinin-4 (ACTN4). Component of the CART complex, at least composed of ACTN4, HGS/HRS, MYO5B and TRIM3. Interacts with ZFYVE28/LST2. Interacts with KIF21B.

It localises to the cytoplasm. The protein localises to the early endosome. Its subcellular location is the golgi apparatus. The protein resides in the trans-Golgi network. It is found in the cell projection. It localises to the dendrite. The catalysed reaction is S-ubiquitinyl-[E2 ubiquitin-conjugating enzyme]-L-cysteine + [acceptor protein]-L-lysine = [E2 ubiquitin-conjugating enzyme]-L-cysteine + N(6)-ubiquitinyl-[acceptor protein]-L-lysine.. In terms of biological role, E3 ubiquitin ligase that plays essential roles in neuronal functions such as regulation of neuronal plasticity, learning, and memory. In addition to its neuronal functions, participates in other biological processes such as innate immunity or cell cycle regulation. Component of the cytoskeleton-associated recycling or transport complex in neurons, polyubiquitinates gamma-actin, thus regulating neuronal plasticity, learning, and memory. Ubiquitinates postsynaptic scaffold GKAP, a neuronal substrate involved in synaptic remodeling and thereby modulates dendritic spine morphology. Positively regulates motility of microtubule-dependent motor protein KIF21B. Induces growth arrest via its RING-dependent E3 ligase activity and ubiquinates CDKN1A. Positively regulates TLR3-mediated signaling by mediating 'Lys-63'-linked polyubiquitination of TLR3. In turn, promotes the recognition and sorting of polyubiquitinated TLR3 by the ESCRT complexes. The protein is Tripartite motif-containing protein 3 (Trim3) of Mus musculus (Mouse).